The sequence spans 52 residues: Protein YabQ (52 aa).

Identified as a multicopy suppressor of the slow growth phenotype of an rsgA (yjeQ) deletion mutant. The sequence is that of Protein YabQ (yabQ) from Escherichia coli (strain K12).